The primary structure comprises 167 residues: MPSQSACPVLSTAPGTPCDLRKHLLNMVSEEKRSPQLSAKTWRRGLRLQKRRNALFLPEGDICVVGSTSGARALIPETSKLERSGTVIAYCNLELLASSDPPVWASQSTGMTGMSYRSQPQLGFKSTPPAHSSVFHHSVKAPKEDQAQEAASRPLTSQDGWNPNIKK.

Residues 115-167 form a disordered region; the sequence is SYRSQPQLGFKSTPPAHSSVFHHSVKAPKEDQAQEAASRPLTSQDGWNPNIKK.

This is an uncharacterized protein from Homo sapiens (Human).